Consider the following 818-residue polypeptide: uncharacterized protein (818 aa).

3 stretches are compositionally biased toward low complexity: residues 1–33, 44–68, and 97–150; these read MYNN…NYIS, NNFL…PQQQ, and NNSN…TKSN. Disordered regions lie at residues 1–68, 92–150, 164–220, 284–306, and 415–445; these read MYNN…PQQQ, LNTG…TKSN, KLDN…KYHE, NMNG…NNSD, and NINK…NNNN. Composition is skewed to acidic residues over residues 172–190 and 205–214; these read SEEE…EEKE and DNNSQDEDKE. Residues 284-302 are compositionally biased toward low complexity; it reads NMNGSSDSSDSSNSSGHSR. A helical membrane pass occupies residues 534-554; that stretch reads IIAIIVIVWPLIANLTYKFIV. Positions 779–808 are disordered; the sequence is ANNFMSDSNRSPSSSSSSSSSTSDSENGML. A compositionally biased stretch (low complexity) spans 784-803; sequence SDSNRSPSSSSSSSSSTSDS.

The protein resides in the membrane. This is an uncharacterized protein from Dictyostelium discoideum (Social amoeba).